The chain runs to 270 residues: Probable septum site-determining protein MinC (270 aa).

The tract at residues 105 to 129 is disordered; the sequence is DRRAPSSKAADEAPVQQAEPAAPAA. Over residues 116–129 the composition is skewed to low complexity; that stretch reads EAPVQQAEPAAPAA.

The protein belongs to the MinC family. As to quaternary structure, interacts with MinD and FtsZ.

Its function is as follows. Cell division inhibitor that blocks the formation of polar Z ring septums. Rapidly oscillates between the poles of the cell to destabilize FtsZ filaments that have formed before they mature into polar Z rings. Prevents FtsZ polymerization. The protein is Probable septum site-determining protein MinC of Burkholderia pseudomallei (strain 668).